Reading from the N-terminus, the 658-residue chain is UvrABC system protein B (658 aa).

In terms of domain architecture, Helicase ATP-binding spans 25–182 (DSIRSGNKFN…LKLVDMGYKR (158 aa)). 38-45 (GVTGSGKT) contacts ATP. Residues 91–114 (YYDYYQPEAYIPRQDLFIEKDSSI) carry the Beta-hairpin motif. The 164-residue stretch at 433-596 (QVEVLFDRAK…TPRSASRNLE (164 aa)) folds into the Helicase C-terminal domain. The region spanning 623–658 (AKIVKELRKQMLEAAKNLEFEKAAALRDEIAKLREL) is the UVR domain.

Belongs to the UvrB family. In terms of assembly, forms a heterotetramer with UvrA during the search for lesions. Interacts with UvrC in an incision complex.

It is found in the cytoplasm. Its function is as follows. The UvrABC repair system catalyzes the recognition and processing of DNA lesions. A damage recognition complex composed of 2 UvrA and 2 UvrB subunits scans DNA for abnormalities. Upon binding of the UvrA(2)B(2) complex to a putative damaged site, the DNA wraps around one UvrB monomer. DNA wrap is dependent on ATP binding by UvrB and probably causes local melting of the DNA helix, facilitating insertion of UvrB beta-hairpin between the DNA strands. Then UvrB probes one DNA strand for the presence of a lesion. If a lesion is found the UvrA subunits dissociate and the UvrB-DNA preincision complex is formed. This complex is subsequently bound by UvrC and the second UvrB is released. If no lesion is found, the DNA wraps around the other UvrB subunit that will check the other stand for damage. This chain is UvrABC system protein B, found in Campylobacter fetus subsp. fetus (strain 82-40).